The chain runs to 154 residues: Superoxide dismutase [Cu-Zn] (154 aa).

Residues His47, His49, and His64 each coordinate Cu cation. An intrachain disulfide couples Cys58 to Cys147. Zn(2+) is bound by residues His64, His72, His81, and Asp84. His121 lines the Cu cation pocket. Positions 125–137 (DDLGRGGNEESKK) are enriched in basic and acidic residues. The disordered stretch occupies residues 125 to 147 (DDLGRGGNEESKKTGNAGPRPAC). Residue Arg144 coordinates substrate.

The protein belongs to the Cu-Zn superoxide dismutase family. In terms of assembly, homodimer. It depends on Cu cation as a cofactor. Requires Zn(2+) as cofactor.

It is found in the cytoplasm. The catalysed reaction is 2 superoxide + 2 H(+) = H2O2 + O2. In terms of biological role, destroys radicals which are normally produced within the cells and which are toxic to biological systems. The sequence is that of Superoxide dismutase [Cu-Zn] from Aspergillus niger (strain ATCC MYA-4892 / CBS 513.88 / FGSC A1513).